The following is a 124-amino-acid chain: Anamorsin homolog (124 aa).

The segment covering 1–20 (MSSPAPSTSHNAANSTQAFS) has biased composition (polar residues). 2 disordered regions span residues 1 to 39 (MSSPAPSTSHNAANSTQAFSLKTRRPIDEDDLLTAEDRE) and 40 to 124 (AKST…TDDI). 4 residues coordinate [2Fe-2S] cluster: C49, C56, C59, and C61. Residues 49–61 (CATRRRACKNCTC) are fe-S binding site A. [4Fe-4S] cluster is bound by residues C86, C89, C97, and C100. 2 short sequence motifs (cx2C motif) span residues 86-89 (CGNC) and 97-100 (CAGC). The tract at residues 86–100 (CGNCAKGDAFRCAGC) is fe-S binding site B.

This sequence belongs to the anamorsin family. As to quaternary structure, monomer. [2Fe-2S] cluster is required as a cofactor. [4Fe-4S] cluster serves as cofactor.

Its subcellular location is the cytoplasm. The protein resides in the mitochondrion intermembrane space. Functionally, component of the cytosolic iron-sulfur (Fe-S) protein assembly (CIA) machinery. Required for the maturation of extramitochondrial Fe-S proteins. Part of an electron transfer chain functioning in an early step of cytosolic Fe-S biogenesis, facilitating the de novo assembly of a [4Fe-4S] cluster on the cytosolic Fe-S scaffold complex. Electrons are transferred from NADPH via a FAD- and FMN-containing diflavin oxidoreductase. Together with the diflavin oxidoreductase, also required for the assembly of the diferric tyrosyl radical cofactor of ribonucleotide reductase (RNR), probably by providing electrons for reduction during radical cofactor maturation in the catalytic small subunit. The chain is Anamorsin homolog from Trypanosoma brucei brucei (strain 927/4 GUTat10.1).